Reading from the N-terminus, the 226-residue chain is Fibronectin type III domain-containing protein 10 (226 aa).

The first 20 residues, 1–20 (MRAPPLLLLLAACAPPPCAA), serve as a signal peptide directing secretion. Over 21–182 (AAPTPPGWEP…FTAEPAGMQD (162 aa)) the chain is Extracellular. The region spanning 74-166 (PAGRSLRASV…PAAAAPETPE (93 aa)) is the Fibronectin type-III domain. Asn-86 and Asn-109 each carry an N-linked (GlcNAc...) asparagine glycan. A helical transmembrane segment spans residues 183–203 (IVVAMTAVGGSICVMLVVICL). Over 204–226 (LVAYITENLMRPALARPGLRRHP) the chain is Cytoplasmic.

It localises to the membrane. In Homo sapiens (Human), this protein is Fibronectin type III domain-containing protein 10 (FNDC10).